The sequence spans 1478 residues: Bud site selection protein 3 homolog (1478 aa).

Disordered stretches follow at residues 732–889 (KSKC…PSKG), 1085–1106 (QRDSNLSGDNDADTPLPMHSSN), and 1146–1168 (YSHSHDEEIDSEKRANTKPVSAP). Positions 749–761 (LVSTNDNSRTLSP) are enriched in polar residues. Residues 763-777 (TIISRTPRTISTITP) are compositionally biased toward low complexity. Residues 786–800 (GQASNSPARGSISTT) show a composition bias toward polar residues. The span at 1146 to 1160 (YSHSHDEEIDSEKRA) shows a compositional bias: basic and acidic residues.

The protein belongs to the BUD3 family.

The protein localises to the cell tip. Its subcellular location is the cell septum. Its function is as follows. Required for proper septum positioning and septum construction during septation. Acts as a landmark to mark sites for future septation, and as part of a scaffold that recruits components of the contractile ring to the site of septation. Not required to determine the site of lateral branch formation. This is Bud site selection protein 3 homolog (BUD3) from Eremothecium gossypii (strain ATCC 10895 / CBS 109.51 / FGSC 9923 / NRRL Y-1056) (Yeast).